Here is a 181-residue protein sequence, read N- to C-terminus: Calmodulin-like protein 6 (181 aa).

EF-hand domains follow at residues 33-68 (EQIKEYKGVFEMFDEEGNGEVKTGELEWLMSLLGIN), 69-104 (PTKSELASMAKDVDRDNKGFFNCDGFLALMGVYHEK), 107-142 (NQESELRAAFRVFDKEGKGYIDWNTLKYVLMNAGEP), and 143-178 (LNEVEAEQMMKEADKDGDRTIDYEEFVAMMTGESFK). Ca(2+) contacts are provided by D156, D158, D160, T162, and E167.

The protein belongs to the calmodulin family. Calglandulin subfamily. As to expression, expressed in prostate, thymus, heart, skeleton muscle, bone marrow and ovary.

It localises to the cytoplasm. Its subcellular location is the nucleus. This chain is Calmodulin-like protein 6 (CALML6), found in Homo sapiens (Human).